The primary structure comprises 106 residues: Putative double-stranded DNA mimic protein VIBHAR_02752 (106 aa).

The protein belongs to the putative dsDNA mimic protein family.

Functionally, may act as a double-stranded DNA (dsDNA) mimic. Probably regulates the activity of a dsDNA-binding protein. In Vibrio campbellii (strain ATCC BAA-1116), this protein is Putative double-stranded DNA mimic protein VIBHAR_02752.